Reading from the N-terminus, the 541-residue chain is Light-independent protochlorophyllide reductase subunit B (541 aa).

Asp-36 is a binding site for [4Fe-4S] cluster. Catalysis depends on Asp-286, which acts as the Proton donor. 421-422 (GM) contacts substrate.

The protein belongs to the ChlB/BchB/BchZ family. As to quaternary structure, protochlorophyllide reductase is composed of three subunits; BchL, BchN and BchB. Forms a heterotetramer of two BchB and two BchN subunits. The cofactor is [4Fe-4S] cluster.

The enzyme catalyses chlorophyllide a + oxidized 2[4Fe-4S]-[ferredoxin] + 2 ADP + 2 phosphate = protochlorophyllide a + reduced 2[4Fe-4S]-[ferredoxin] + 2 ATP + 2 H2O. Its pathway is porphyrin-containing compound metabolism; bacteriochlorophyll biosynthesis (light-independent). Component of the dark-operative protochlorophyllide reductase (DPOR) that uses Mg-ATP and reduced ferredoxin to reduce ring D of protochlorophyllide (Pchlide) to form chlorophyllide a (Chlide). This reaction is light-independent. The NB-protein (BchN-BchB) is the catalytic component of the complex. This chain is Light-independent protochlorophyllide reductase subunit B, found in Chloroflexus aurantiacus (strain ATCC 29364 / DSM 637 / Y-400-fl).